The chain runs to 376 residues: N-acetyldiaminopimelate deacetylase (376 aa).

Residue D69 is part of the active site. Residue E128 is the Proton acceptor of the active site.

This sequence belongs to the peptidase M20A family. N-acetyldiaminopimelate deacetylase subfamily.

It carries out the reaction N-acetyl-(2S,6S)-2,6-diaminopimelate + H2O = (2S,6S)-2,6-diaminopimelate + acetate. The protein operates within amino-acid biosynthesis; L-lysine biosynthesis via DAP pathway; LL-2,6-diaminopimelate from (S)-tetrahydrodipicolinate (acetylase route): step 3/3. Its function is as follows. Catalyzes the conversion of N-acetyl-diaminopimelate to diaminopimelate and acetate. This chain is N-acetyldiaminopimelate deacetylase, found in Bacillus cereus (strain 03BB102).